Reading from the N-terminus, the 319-residue chain is N-acetyllactosaminide alpha-1,3-galactosyltransferase-like 1 (319 aa).

Residues 1-6 (MQYKKE) lie on the Cytoplasmic side of the membrane. Residues 7–26 (ALLLMLFAVLLALTQRFSYS) form a helical; Signal-anchor for type II membrane protein membrane-spanning segment. Residues 27 to 319 (RTKDHLQKMY…IKHIKIAWKP (293 aa)) are Lumenal-facing. Residues N89 and N101 are each glycosylated (N-linked (GlcNAc...) asparagine). Residues 97 to 102 (FATGNF), 188 to 190 (AVN), and 210 to 213 (HAWW) contribute to the substrate site. E278 serves as the catalytic Nucleophile.

This sequence belongs to the glycosyltransferase 6 family. Mn(2+) serves as cofactor.

The protein resides in the golgi apparatus. It localises to the golgi stack membrane. The catalysed reaction is a beta-D-galactosyl-(1-&gt;4)-N-acetyl-beta-D-glucosaminyl derivative + UDP-alpha-D-galactose = an alpha-D-galactosyl-(1-&gt;3)-beta-D-galactosyl-(1-&gt;4)-N-acetyl-beta-D-glucosaminyl derivative + UDP + H(+). The protein operates within protein modification; protein glycosylation. Functionally, synthesizes the galactose-alpha(1,3)-galactose group by catalyzing the transfer of a galactose residue, with an alpha-1,3 linkage, on terminal lactosaminide (Gal-beta-1,4-GlcNAc-R) disaccharide borne by a glycoprotein or a glycolipid. The polypeptide is N-acetyllactosaminide alpha-1,3-galactosyltransferase-like 1 (Ggta1l1) (Mus musculus (Mouse)).